The primary structure comprises 558 residues: Putative F-box/LRR-repeat protein R542 (558 aa).

Positions 1-47 constitute an F-box domain; sequence MLLNLPYEILLIIFSLIESKKFFKLLSINKEVREFILTMLNQNPKSF. LRR repeat units lie at residues 73-105, 139-176, 177-220, 251-284, 285-317, 329-361, 369-395, 420-444, 445-477, and 481-508; these read KSTINDDQLKYLSDVYSLNISNCKSITDRGLSF, CGKITDKGIENLVYGKTLNSDEPIPTVINTIRKINLQC, CMRI…KIDG, LDKLTKLILPNVPEHIEYIDFNKMPNLVKADLSG, CINLLDEQLKGLSKVRKLNLKECYDITDVGLSY, CFRITDSGLKYLSNADYVNICGCLKITNEGFFY, VVGYTTLSLYDCMIDGCGDYEYLTISD, CNNIIDVDLKSFTNLPTLSKIDLRY, CNNITNQGLSALCNIPIVKISNNYQISSKGISY, and SKKISIESCPKINSFPNLTGLKKLVFKT.

This Acanthamoeba polyphaga mimivirus (APMV) protein is Putative F-box/LRR-repeat protein R542.